A 323-amino-acid polypeptide reads, in one-letter code: Aquaporin-4 (323 aa).

The Cytoplasmic segment spans residues Met1–Lys36. S-palmitoyl cysteine attachment occurs at residues Cys13 and Cys17. The chain crosses the membrane as a helical span at residues Ala37–Ile57. At Asn58–Asp69 the chain is on the extracellular side. Residues Met70–Gly89 form a helical membrane-spanning segment. Residues His90–Gly93 lie on the Cytoplasmic side of the membrane. Positions Gly94–Thr101 form an intramembrane region, discontinuously helical. Positions Asn97 to Ala99 match the NPA 1 motif. The Cytoplasmic portion of the chain corresponds to Val102–Ser115. Residue Ser111 is modified to Phosphoserine; by PKG. The helical transmembrane segment at Val116–Val136 threads the bilayer. Residues Thr137–Ser155 lie on the Extracellular side of the membrane. N-linked (GlcNAc...) asparagine glycosylation occurs at Asn153. The helical transmembrane segment at Ala156–Ala176 threads the bilayer. Residues Ser177–Asp184 lie on the Cytoplasmic side of the membrane. Residue Ser180 is modified to Phosphoserine; by PKC. A helical membrane pass occupies residues Val185–Ile205. N-linked (GlcNAc...) asparagine glycosylation occurs at Asn206. Over Asn206–Thr208 the chain is Extracellular. The discontinuously helical intramembrane region spans Gly209–Val222. The NPA 2 signature appears at Asn213–Ala215. Topologically, residues Ile223–Trp231 are extracellular. A helical transmembrane segment spans residues Ile232–Phe252. Topologically, residues Cys253–Val323 are cytoplasmic. A phosphoserine mark is found at Ser276 and Ser285. Thr289 carries the post-translational modification Phosphothreonine. Ser321 bears the Phosphoserine mark.

The protein belongs to the MIP/aquaporin (TC 1.A.8) family. In terms of assembly, homotetramer. The tetramers can form oligomeric arrays in membranes. The size of the oligomers differs between tissues and is smaller in skeletal muscle than in brain. Interaction between AQP4 oligomeric arrays in close-by cells can contribute to cell-cell adhesion. Part of a complex containing MLC1, TRPV4, HEPACAM and ATP1B1. Post-translationally, phosphorylation by PKC at Ser-180 reduces conductance by 50%. Phosphorylation by PKG at Ser-111 in response to glutamate increases conductance by 40%. In terms of processing, isoform 2: Palmitoylated on its N-terminal region. Isoform 1: Not palmitoylated. As to expression, detected in brain and lung.

The protein localises to the cell membrane. Its subcellular location is the basolateral cell membrane. It localises to the endosome membrane. The protein resides in the sarcolemma. It is found in the cell projection. It carries out the reaction H2O(in) = H2O(out). Functionally, forms a water-specific channel. Plays an important role in brain water homeostasis and in glymphatic solute transport. Required for a normal rate of water exchange across the blood brain interface. Required for normal levels of cerebrospinal fluid influx into the brain cortex and parenchyma along paravascular spaces that surround penetrating arteries, and for normal drainage of interstitial fluid along paravenous drainage pathways. Thereby, it is required for normal clearance of solutes from the brain interstitial fluid, including soluble beta-amyloid peptides derived from APP. Plays a redundant role in urinary water homeostasis and urinary concentrating ability. The protein is Aquaporin-4 (AQP4) of Bos taurus (Bovine).